We begin with the raw amino-acid sequence, 333 residues long: Cap-specific mRNA (nucleoside-2'-O-)-methyltransferase (333 aa).

Tyrosine 22 provides a ligand contact to mRNA. Positions 39, 66, 68, 72, 95, 97, 116, and 138 each coordinate S-adenosyl-L-methionine. Residues 169–249 are binding to NPH-I; the sequence is PVASSLKWRC…NKIVRNKVVV (81 aa). Residues 169–333 are binding to Rap94; that stretch reads PVASSLKWRC…NSKRSVRGNK (165 aa). Lysine 175 acts as the For methyltransferase activity in catalysis. MRNA is bound by residues 177 to 180, aspartate 182, 205 to 207, and glutamate 233; these read RCPF and SAE.

It belongs to the class I-like SAM-binding methyltransferase superfamily. Poxvirus/kinetoplastid 2'-O-MTase family. Interacts with poly(A) polymerase catalytic subunit OPG063. Interacts with OPG109 and OPG123; these interactions might help linking transcription to capping and polyadenylation.

It is found in the virion. The catalysed reaction is a 5'-end (N(7)-methyl 5'-triphosphoguanosine)-ribonucleoside in mRNA + S-adenosyl-L-methionine = a 5'-end (N(7)-methyl 5'-triphosphoguanosine)-(2'-O-methyl-ribonucleoside) in mRNA + S-adenosyl-L-homocysteine + H(+). Functionally, displays methyltransferase, positive regulation of the poly(A) polymerase and transcription elongation activities. Involved in the modification of both mRNA ends and in intermediate and late gene positive transcription elongation. At the mRNAs 5' end, methylates the ribose 2' OH group of the first transcribed nucleotide, thereby producing a 2'-O-methylpurine cap. At the 3' end, functions as a processivity factor which stimulates the activity of the viral poly(A) polymerase OPG063 that creates mRNA's poly(A) tail. In the presence of OPG102, OPG063 does not dissociate from the RNA allowing tail elongation to around 250 adenylates. This is Cap-specific mRNA (nucleoside-2'-O-)-methyltransferase (OPG102) from Homo sapiens (Human).